Reading from the N-terminus, the 430-residue chain is Serine--tRNA ligase (430 aa).

Position 237–239 (237–239 (TAE)) interacts with L-serine. 268–270 (RSE) serves as a coordination point for ATP. Glutamate 291 is a binding site for L-serine. 355-358 (EISS) contributes to the ATP binding site. Serine 391 contacts L-serine.

This sequence belongs to the class-II aminoacyl-tRNA synthetase family. Type-1 seryl-tRNA synthetase subfamily. Homodimer. The tRNA molecule binds across the dimer.

The protein localises to the cytoplasm. The catalysed reaction is tRNA(Ser) + L-serine + ATP = L-seryl-tRNA(Ser) + AMP + diphosphate + H(+). It catalyses the reaction tRNA(Sec) + L-serine + ATP = L-seryl-tRNA(Sec) + AMP + diphosphate + H(+). The protein operates within aminoacyl-tRNA biosynthesis; selenocysteinyl-tRNA(Sec) biosynthesis; L-seryl-tRNA(Sec) from L-serine and tRNA(Sec): step 1/1. Its function is as follows. Catalyzes the attachment of serine to tRNA(Ser). Is also able to aminoacylate tRNA(Sec) with serine, to form the misacylated tRNA L-seryl-tRNA(Sec), which will be further converted into selenocysteinyl-tRNA(Sec). The polypeptide is Serine--tRNA ligase (Yersinia enterocolitica serotype O:8 / biotype 1B (strain NCTC 13174 / 8081)).